The chain runs to 759 residues: Olfactomedin-like protein 2B (759 aa).

The N-terminal stretch at 1–20 (MAKSLLLVLCFALVTTLGWG) is a signal peptide. Coiled-coil stretches lie at residues 40–68 (TEDETLQNEADNQENVLSQLLGDYDKVKA) and 179–209 (KLEEEISKNLTKENEQIREDVEEIRTEMNKR). Asn-187 and Asn-213 each carry an N-linked (GlcNAc...) asparagine glycan. 2 disordered regions span residues 346-396 (TRRP…VSAS) and 456-494 (THTAPVPPPPVRTDSPGKDSTARQGTVPPGPTLSPEEED). Positions 356-396 (AAVTADAGTTSAGTPTTALPSARLPASTAAPSTPDPAVSAS) are enriched in low complexity. An Olfactomedin-like domain is found at 502–759 (RCKDTLSTIT…QVTYHVIFAY (258 aa)). Cys-503 and Cys-689 are joined by a disulfide. Asn-704 carries N-linked (GlcNAc...) asparagine glycosylation.

In terms of assembly, homodimer. Binds to heparin and chondroitin sulfate E. Post-translationally, O-glycosylated and N-glycosylated.

The protein resides in the secreted. This chain is Olfactomedin-like protein 2B (OLFML2B), found in Bos taurus (Bovine).